A 339-amino-acid chain; its full sequence is Replication factor C subunit 5 (339 aa).

59 to 66 (GPPGTGKT) serves as a coordination point for ATP.

The protein belongs to the activator 1 small subunits family. As to quaternary structure, subunit of the RFC complex, an heteropentameric complex consisting of a large subunit RFC1 and four small subunits RFC2, RFC3, RFC4 and RFC5; the RFC complex interacts with PCNA. Forms an heterotetrameric complex with RFC2, RFC3 and RFC4; this complex has ATPase activity but is not stimulated by PCNA. The heterotetramer of subunits RFC2, RFC3, RFC4 and RFC5 interacts with RAD17.

It is found in the nucleus. In terms of biological role, subunit of the replication factor C (RFC) complex which acts during elongation of primed DNA templates by DNA polymerases delta and epsilon, and is necessary for ATP-dependent loading of proliferating cell nuclear antigen (PCNA) onto primed DNA. This chain is Replication factor C subunit 5 (Rfc5), found in Mus musculus (Mouse).